The following is a 1453-amino-acid chain: Spike glycoprotein (1453 aa).

The first 31 residues, 1–31 (MIVLTLCLFLVLYNSVICTSNNECVQVNVTQ), serve as a signal peptide directing secretion. The tract at residues 32-780 (LPGNENIIRD…WTTTPNFYYY (749 aa)) is S1. Residues 32 to 1394 (LPGNENIIRD…NRIETYVKWP (1363 aa)) are Virion surface-facing. An interaction with host ANPEP region spans residues 661 to 805 (VIYEEGDNIV…DSNDVDCEPI (145 aa)). Residues 781 to 1453 (SIYNYTNERV…YEPIEKVHVH (673 aa)) form an S2 region. A fusion peptide region spans residues 1026–1047 (AGGITLGALGGGAVSIPFAVAV). The interval 1041 to 1160 (IPFAVAVQAR…QVDRLITGRL (120 aa)) is heptad repeat 1 (HR1). 2 coiled-coil regions span residues 1108–1152 (QDVV…DAQV) and 1342–1384 (TYLN…LEWL). Residues 1309–1406 (PDYIDINQTV…VWLLIGLVVI (98 aa)) are heptad repeat 2 (HR2). The helical transmembrane segment at 1395–1414 (WYVWLLIGLVVIFCIPLLLF) threads the bilayer. Residues 1415–1453 (CCCSTGCCGCFGCIGSCCHSMCSRRQFESYEPIEKVHVH) are Intravirion-facing. Residues 1449 to 1453 (KVHVH) carry the KxHxx motif.

The protein belongs to the alphacoronaviruses spike protein family. As to quaternary structure, homotrimer. During virus morphogenesis, found in a complex with M and HE proteins. Interacts with host ANPEP.

The protein resides in the virion membrane. Its subcellular location is the host endoplasmic reticulum-Golgi intermediate compartment membrane. Its function is as follows. S1 region attaches the virion to the cell membrane by interacting with host ANPEP/aminopeptidase N, initiating the infection. Binding to the receptor probably induces conformational changes in the S glycoprotein unmasking the fusion peptide of S2 region and activating membranes fusion. S2 region belongs to the class I viral fusion protein. Under the current model, the protein has at least 3 conformational states: pre-fusion native state, pre-hairpin intermediate state, and post-fusion hairpin state. During viral and target cell membrane fusion, the coiled coil regions (heptad repeats) regions assume a trimer-of-hairpins structure, positioning the fusion peptide in close proximity to the C-terminal region of the ectodomain. The formation of this structure appears to drive apposition and subsequent fusion of viral and target cell membranes. The protein is Spike glycoprotein of Canis lupus familiaris (Dog).